Consider the following 563-residue polypeptide: MASQMHTSISSGDEGKDAVLKKERPYKIFFKDLFVFKENEIAARKKERMKNHSMKIYQKTTFSSRMKSRSHLGQLAFFADAGSSSYERLGLDPTLILRLTEGADRKRTVHEFINDQRDRFLLEYTVSTKKKTIKRFERLIAIKENQLKKAEKKLQDDALSFEEFLRENDQRSVDALKMAAQETINKLQMTSELKKASMEVQSIKSDIAKTEFLLKEYMKYGFFLLKLSPKQWQIQQSQKRAQSSKSNHILPKILEKFSINTAKGDNSIDSDKMSVSEEWSSRRGSQGGRHGKHTLGQDSRKSSGFTRPESMASEDSLEYFLEDELVEFDLLPEIYFKEPEELLQVFTELEEQNLTLVQYSQDVDENLEDVNKREKFIQDKINNNISFLLEHKHMLRMNCEREEEKAAELELRSRLFSFGEFNSDAQEKLIDSLSKKINQVYRVCIGDAEVGSLNAVQKLVKVESRLVELSDLIESIPREHVEAIERLKQKERRQKLREEKMKEKQRHQEERLKAALERAVAQPKKKLGRRLIYRSKPQSADKQELLLVSDTRSKSQDEEYFFS.

The stretch at 128 to 211 (TKKKTIKRFE…SIKSDIAKTE (84 aa)) forms a coiled coil. Positions 265–310 (DNSIDSDKMSVSEEWSSRRGSQGGRHGKHTLGQDSRKSSGFTRPES) are disordered. Residues 269-281 (DSDKMSVSEEWSS) show a composition bias toward basic and acidic residues. 2 coiled-coil regions span residues 361–415 (QDVD…RSRL) and 454–522 (NAVQ…AVAQ). Residues 543 to 563 (QELLLVSDTRSKSQDEEYFFS) are disordered.

Interacts with CCDC42, CFAP53, IFT88 and ODF2. Interacts with CCDC146. Interacts with TEKT3. Interacts with ubiquitinated histone H2A. Expressed exclusively in testis where it is detected mainly in spermatogonia and spermatocytes (at protein level).

The protein localises to the cytoplasm. Its subcellular location is the cytoskeleton. The protein resides in the microtubule organizing center. It is found in the centrosome. It localises to the perinuclear region. The protein localises to the cell projection. Its subcellular location is the cilium. The protein resides in the flagellum. Essential for male fertility. Required for sperm flagellum biogenesis. Also required for acrosome biogenesis. Required for the attachment of developing acrosomes to the nucleus during spermiogenesis and may be involved in the transport of fibrous sheath components. In Mus musculus (Mouse), this protein is Coiled-coil domain-containing protein 38 (Ccdc38).